A 282-amino-acid polypeptide reads, in one-letter code: Secretory carrier-associated membrane protein 1 (282 aa).

Residues 1–49 are disordered; that stretch reads MSRYQSHSFDDGEINPFANPTSVPAATSKLSPLPPEPYDRGATMDIPLD. Residues 1–117 lie on the Cytoplasmic side of the membrane; it reads MSRYQSHSFD…EIPIHLQRIQ (117 aa). Over residues 18–30 the composition is skewed to polar residues; it reads ANPTSVPAATSKL. At Ser-31 the chain carries Phosphoserine. Residues 48-93 are a coiled coil; sequence LDSGKDLKAKEKELREKEAELKRREQEIKRKEDAIAQAGIVIEEKN. The next 4 membrane-spanning stretches (helical) occupy residues 118 to 138, 150 to 170, 185 to 205, and 233 to 253; these read YVAFTSMLGLVVCLLWNIVAV, IWFLAIIYFISGVPGAYVMWY, FGWFFFTYLFHIAFCVFAAVA, and IFYFIGFGFFCLESLVSIWVI. Over 254-282 the chain is Cytoplasmic; the sequence is QQVYMYFRGSGKAAEMKQEATRRAMMAAL.

It belongs to the SCAMP family.

Its subcellular location is the cell membrane. The protein resides in the cytoplasmic vesicle. The protein localises to the secretory vesicle membrane. In terms of biological role, probably involved in membrane trafficking. The chain is Secretory carrier-associated membrane protein 1 (SCAMP1) from Arabidopsis thaliana (Mouse-ear cress).